A 171-amino-acid chain; its full sequence is 3-hydroxydecanoyl-[acyl-carrier-protein] dehydratase (171 aa).

The active site involves H70.

Belongs to the thioester dehydratase family. FabA subfamily. As to quaternary structure, homodimer.

The protein resides in the cytoplasm. It carries out the reaction a (3R)-hydroxyacyl-[ACP] = a (2E)-enoyl-[ACP] + H2O. The catalysed reaction is (3R)-hydroxydecanoyl-[ACP] = (2E)-decenoyl-[ACP] + H2O. It catalyses the reaction (2E)-decenoyl-[ACP] = (3Z)-decenoyl-[ACP]. Its pathway is lipid metabolism; fatty acid biosynthesis. Its function is as follows. Necessary for the introduction of cis unsaturation into fatty acids. Catalyzes the dehydration of (3R)-3-hydroxydecanoyl-ACP to E-(2)-decenoyl-ACP and then its isomerization to Z-(3)-decenoyl-ACP. Can catalyze the dehydratase reaction for beta-hydroxyacyl-ACPs with saturated chain lengths up to 16:0, being most active on intermediate chain length. The protein is 3-hydroxydecanoyl-[acyl-carrier-protein] dehydratase of Shewanella denitrificans (strain OS217 / ATCC BAA-1090 / DSM 15013).